A 62-amino-acid polypeptide reads, in one-letter code: DNA gyrase inhibitor YacG (62 aa).

Zn(2+)-binding residues include Cys-8, Cys-11, Cys-27, and Cys-31.

The protein belongs to the DNA gyrase inhibitor YacG family. As to quaternary structure, interacts with GyrB. It depends on Zn(2+) as a cofactor.

Functionally, inhibits all the catalytic activities of DNA gyrase by preventing its interaction with DNA. Acts by binding directly to the C-terminal domain of GyrB, which probably disrupts DNA binding by the gyrase. The sequence is that of DNA gyrase inhibitor YacG from Actinobacillus pleuropneumoniae serotype 5b (strain L20).